The following is a 452-amino-acid chain: UPF0210 protein Ccel_1722 (452 aa).

This sequence belongs to the UPF0210 family. Homodimer.

In Ruminiclostridium cellulolyticum (strain ATCC 35319 / DSM 5812 / JCM 6584 / H10) (Clostridium cellulolyticum), this protein is UPF0210 protein Ccel_1722.